Consider the following 207-residue polypeptide: Urease accessory protein UreG (207 aa).

A GTP-binding site is contributed by G14–T21.

Belongs to the SIMIBI class G3E GTPase family. UreG subfamily. In terms of assembly, homodimer. UreD, UreF and UreG form a complex that acts as a GTP-hydrolysis-dependent molecular chaperone, activating the urease apoprotein by helping to assemble the nickel containing metallocenter of UreC. The UreE protein probably delivers the nickel.

The protein localises to the cytoplasm. In terms of biological role, facilitates the functional incorporation of the urease nickel metallocenter. This process requires GTP hydrolysis, probably effectuated by UreG. The sequence is that of Urease accessory protein UreG from Chelativorans sp. (strain BNC1).